The sequence spans 206 residues: AT-hook motif nuclear-localized protein 28 (206 aa).

Disordered regions lie at residues 1–21 and 160–206; these read METVGRPRGRPRGSKNKPKAP and TEEE…PSPY. A DNA-binding region (a.T hook) is located at residues 5 to 17; the sequence is GRPRGRPRGSKNK. The span at 7-18 shows a compositional bias: basic residues; that stretch reads PRGRPRGSKNKP. Positions 27–173 constitute a PPC domain; sequence DPPMSPYILE…QRNSAEGEEE (147 aa).

It is found in the nucleus. Its function is as follows. Transcription factor that specifically binds AT-rich DNA sequences related to the nuclear matrix attachment regions (MARs). The protein is AT-hook motif nuclear-localized protein 28 of Arabidopsis thaliana (Mouse-ear cress).